The sequence spans 195 residues: Urease accessory protein UreG (195 aa).

Residue 9–16 (GPVGSGKT) participates in GTP binding.

This sequence belongs to the SIMIBI class G3E GTPase family. UreG subfamily. Homodimer. UreD, UreF and UreG form a complex that acts as a GTP-hydrolysis-dependent molecular chaperone, activating the urease apoprotein by helping to assemble the nickel containing metallocenter of UreC. The UreE protein probably delivers the nickel.

It localises to the cytoplasm. Facilitates the functional incorporation of the urease nickel metallocenter. This process requires GTP hydrolysis, probably effectuated by UreG. This chain is Urease accessory protein UreG, found in Aliarcobacter butzleri (strain RM4018) (Arcobacter butzleri).